A 205-amino-acid polypeptide reads, in one-letter code: Small ribosomal subunit protein uS4 (205 aa).

In terms of domain architecture, S4 RNA-binding spans 93 to 171; the sequence is SRVSSVLYRS…SPHYLEVDRE (79 aa).

The protein belongs to the universal ribosomal protein uS4 family. As to quaternary structure, part of the 30S ribosomal subunit. Contacts protein S5. The interaction surface between S4 and S5 is involved in control of translational fidelity.

Functionally, one of the primary rRNA binding proteins, it binds directly to 16S rRNA where it nucleates assembly of the body of the 30S subunit. Its function is as follows. With S5 and S12 plays an important role in translational accuracy. The protein is Small ribosomal subunit protein uS4 of Neorickettsia sennetsu (strain ATCC VR-367 / Miyayama) (Ehrlichia sennetsu).